A 245-amino-acid chain; its full sequence is 1-(5-phosphoribosyl)-5-[(5-phosphoribosylamino)methylideneamino] imidazole-4-carboxamide isomerase (245 aa).

The Proton acceptor role is filled by Asp-7. The active-site Proton donor is the Asp-129.

Belongs to the HisA/HisF family.

The protein localises to the cytoplasm. It catalyses the reaction 1-(5-phospho-beta-D-ribosyl)-5-[(5-phospho-beta-D-ribosylamino)methylideneamino]imidazole-4-carboxamide = 5-[(5-phospho-1-deoxy-D-ribulos-1-ylimino)methylamino]-1-(5-phospho-beta-D-ribosyl)imidazole-4-carboxamide. It participates in amino-acid biosynthesis; L-histidine biosynthesis; L-histidine from 5-phospho-alpha-D-ribose 1-diphosphate: step 4/9. The protein is 1-(5-phosphoribosyl)-5-[(5-phosphoribosylamino)methylideneamino] imidazole-4-carboxamide isomerase of Shewanella halifaxensis (strain HAW-EB4).